The primary structure comprises 697 residues: Elongation factor G (697 aa).

The region spanning glutamate 8–threonine 287 is the tr-type G domain. GTP-binding positions include alanine 17–threonine 24, aspartate 81–histidine 85, and asparagine 135–aspartate 138.

It belongs to the TRAFAC class translation factor GTPase superfamily. Classic translation factor GTPase family. EF-G/EF-2 subfamily.

It localises to the cytoplasm. Catalyzes the GTP-dependent ribosomal translocation step during translation elongation. During this step, the ribosome changes from the pre-translocational (PRE) to the post-translocational (POST) state as the newly formed A-site-bound peptidyl-tRNA and P-site-bound deacylated tRNA move to the P and E sites, respectively. Catalyzes the coordinated movement of the two tRNA molecules, the mRNA and conformational changes in the ribosome. This is Elongation factor G (fusA) from Arthrospira platensis (Spirulina platensis).